The chain runs to 210 residues: FMN-dependent NADH:quinone oxidoreductase (210 aa).

FMN-binding positions include Ser9 and 15 to 17 (SHS).

It belongs to the azoreductase type 1 family. In terms of assembly, homodimer. Requires FMN as cofactor.

The catalysed reaction is 2 a quinone + NADH + H(+) = 2 a 1,4-benzosemiquinone + NAD(+). It carries out the reaction N,N-dimethyl-1,4-phenylenediamine + anthranilate + 2 NAD(+) = 2-(4-dimethylaminophenyl)diazenylbenzoate + 2 NADH + 2 H(+). Its function is as follows. Quinone reductase that provides resistance to thiol-specific stress caused by electrophilic quinones. Functionally, also exhibits azoreductase activity. Catalyzes the reductive cleavage of the azo bond in aromatic azo compounds to the corresponding amines. This chain is FMN-dependent NADH:quinone oxidoreductase, found in Mesorhizobium japonicum (strain LMG 29417 / CECT 9101 / MAFF 303099) (Mesorhizobium loti (strain MAFF 303099)).